Reading from the N-terminus, the 243-residue chain is MTGKVYLVGAGPGDPEYLTLQAQQCLQSAEVLIYDALIDPRILDLVPANCDRIAVGKRGGAESTPQATINQLLVEHCQQGRKVIRLKSGDPFVFGRAASELDALERSGCDYAVLPGLSTALAAPLLAGIPITDPVLSRGFAVYTVHEPDALNWEALAQLETLILLMGSRHLLTIGHELIRHGRSPDSPVALIQWAGHPQQTVLESSLSRMAQQWGDQPLSPCVIVIGEVVRLRKYWAHYRYDG.

Residues P12, 88 to 90 (SGD), 118 to 119 (ST), M166, and A195 contribute to the S-adenosyl-L-homocysteine site.

This sequence belongs to the precorrin methyltransferase family.

The catalysed reaction is uroporphyrinogen III + 2 S-adenosyl-L-methionine = precorrin-2 + 2 S-adenosyl-L-homocysteine + H(+). Its pathway is cofactor biosynthesis; adenosylcobalamin biosynthesis; precorrin-2 from uroporphyrinogen III: step 1/1. It participates in porphyrin-containing compound metabolism; siroheme biosynthesis; precorrin-2 from uroporphyrinogen III: step 1/1. Functionally, catalyzes the two successive C-2 and C-7 methylation reactions involved in the conversion of uroporphyrinogen III to precorrin-2 via the intermediate formation of precorrin-1. It is a step in the biosynthesis of both cobalamin (vitamin B12) and siroheme. This Synechococcus elongatus (strain ATCC 33912 / PCC 7942 / FACHB-805) (Anacystis nidulans R2) protein is Uroporphyrinogen-III C-methyltransferase.